A 279-amino-acid polypeptide reads, in one-letter code: MRISPSEAAMKLSLSPPPYADAPVVVLISGLGGSGSYWLPQLAVLEQEYQVVCYDQRGTGNNPDTLAEDYSIAQMAAELHQALVAAGIKRYAVVGHALGALVGMQLALDYPASVTMLVSVNGWLRINAHTRRCFQVREQLLHSGGAQAWVEAQPLFLYPADWMAARAPRLEAEDALALAHFQGKNNLLRRLNALKRADFSHHADRIRCPVQIICASDDLLVPSACSSELHAALPDSQKMVMRYGGHACNVTHPETFNALLLNGLASLLHHREAACKELL.

In terms of domain architecture, AB hydrolase-1 spans 23–126; it reads PVVVLISGLG…LVSVNGWLRI (104 aa).

This sequence belongs to the AB hydrolase superfamily. Hydrolase RutD family.

The catalysed reaction is carbamate + 2 H(+) = NH4(+) + CO2. Involved in pyrimidine catabolism. May facilitate the hydrolysis of carbamate, a reaction that can also occur spontaneously. In Escherichia coli O17:K52:H18 (strain UMN026 / ExPEC), this protein is Putative carbamate hydrolase RutD.